A 689-amino-acid polypeptide reads, in one-letter code: Methionine--tRNA ligase (689 aa).

The short motif at 15-25 (PYANGPVHIGH) is the 'HIGH' region element. The Zn(2+) site is built by Cys-147, Cys-150, Cys-160, and Cys-163. Residues 342-346 (KISTS) carry the 'KMSKS' region motif. ATP is bound at residue Thr-345. The 102-residue stretch at 588–689 (DFAKMDIRVA…AVVNAGSMIG (102 aa)) folds into the tRNA-binding domain.

It belongs to the class-I aminoacyl-tRNA synthetase family. MetG type 1 subfamily. As to quaternary structure, homodimer. Zn(2+) serves as cofactor.

It is found in the cytoplasm. It catalyses the reaction tRNA(Met) + L-methionine + ATP = L-methionyl-tRNA(Met) + AMP + diphosphate. Is required not only for elongation of protein synthesis but also for the initiation of all mRNA translation through initiator tRNA(fMet) aminoacylation. The sequence is that of Methionine--tRNA ligase from Cytophaga hutchinsonii (strain ATCC 33406 / DSM 1761 / CIP 103989 / NBRC 15051 / NCIMB 9469 / D465).